The primary structure comprises 504 residues: Maturase K (504 aa).

It belongs to the intron maturase 2 family. MatK subfamily.

Its subcellular location is the plastid. It localises to the chloroplast. Its function is as follows. Usually encoded in the trnK tRNA gene intron. Probably assists in splicing its own and other chloroplast group II introns. In Actinidia deliciosa (Kiwi), this protein is Maturase K.